Here is a 189-residue protein sequence, read N- to C-terminus: Early E3 20.5 kDa glycoprotein (189 aa).

Residues asparagine 73 and asparagine 137 are each glycosylated (N-linked (GlcNAc...) asparagine; by host).

It belongs to the adenoviridae E3_20 family.

In terms of biological role, E3 proteins seem to be dispensable for virus growth in tissue culture cells. They are potentially important for virus growth under special conditions; E3 region may help adenoviruses to evade the immune surveillance of the host. The chain is Early E3 20.5 kDa glycoprotein from Human adenovirus B serotype 3 (HAdV-3).